A 748-amino-acid polypeptide reads, in one-letter code: Serine/threonine-protein kinase CG17528 (748 aa).

2 stretches are compositionally biased toward polar residues: residues Gln22–Ser35 and Glu47–Asn59. Disordered regions lie at residues Gln22–Thr41 and Glu47–Asp81. A phosphoserine mark is found at Ser67, Ser70, Ser73, Ser87, Ser88, and Ser89. Thr91 carries the phosphothreonine modification. Ser93 bears the Phosphoserine mark. Phosphothreonine is present on Thr100. Doublecortin domains lie at Leu158–Asn244 and Arg313–Phe396. The 259-residue stretch at Tyr477–Thr735 folds into the Protein kinase domain. Residues Ile483 to Val491 and Lys506 contribute to the ATP site. Asp598 acts as the Proton acceptor in catalysis.

This sequence belongs to the protein kinase superfamily. CAMK Ser/Thr protein kinase family. CaMK subfamily.

It catalyses the reaction L-seryl-[protein] + ATP = O-phospho-L-seryl-[protein] + ADP + H(+). The catalysed reaction is L-threonyl-[protein] + ATP = O-phospho-L-threonyl-[protein] + ADP + H(+). This Drosophila melanogaster (Fruit fly) protein is Serine/threonine-protein kinase CG17528.